The sequence spans 375 residues: Histidine biosynthesis bifunctional protein HisB (375 aa).

Residues methionine 1–proline 168 form a histidinol-phosphatase region. Aspartate 8 functions as the Nucleophile in the catalytic mechanism. 3 residues coordinate Mg(2+): aspartate 8, aspartate 10, and aspartate 128. Residue aspartate 10 is the Proton donor of the active site. The tract at residues arginine 169–leucine 375 is imidazoleglycerol-phosphate dehydratase.

In the N-terminal section; belongs to the histidinol-phosphatase family. This sequence in the C-terminal section; belongs to the imidazoleglycerol-phosphate dehydratase family. Mg(2+) is required as a cofactor.

It is found in the cytoplasm. It catalyses the reaction D-erythro-1-(imidazol-4-yl)glycerol 3-phosphate = 3-(imidazol-4-yl)-2-oxopropyl phosphate + H2O. The catalysed reaction is L-histidinol phosphate + H2O = L-histidinol + phosphate. The protein operates within amino-acid biosynthesis; L-histidine biosynthesis; L-histidine from 5-phospho-alpha-D-ribose 1-diphosphate: step 6/9. It participates in amino-acid biosynthesis; L-histidine biosynthesis; L-histidine from 5-phospho-alpha-D-ribose 1-diphosphate: step 8/9. This Xanthomonas oryzae pv. oryzae (strain MAFF 311018) protein is Histidine biosynthesis bifunctional protein HisB.